The chain runs to 298 residues: MIPYATVEEASIALGRNLTRLETLWFDYSATKSDYYLYCHNILFLFLVFSLVPLPLVFVELARSASGLFNRYKIQPKVNYSLSDMFKCYKDVMTMFILVVGPLQLVSYPSIQMIEIRSGLPLPTITEMLSQLVVYFLIEDYTNYWVHRFFHSKWGYDKIHRVHHEYTAPIGYAAPYAHWAEVLLLGIPTFMGPAIAPGHMITFWLWIALRQMEAIETHSGYDFPWSPTKYIPFYGGAEYHDYHHYVGGQSQSNFASVFTYCDYIYGTDKGYRFQKKLLEQIKESSKKSNKHNGGIKSD.

3 consecutive transmembrane segments (helical) span residues 42 to 62 (ILFL…VELA), 96 to 116 (FILV…MIEI), and 118 to 138 (SGLP…YFLI). The Fatty acid hydroxylase domain maps to 132–267 (LVVYFLIEDY…FTYCDYIYGT (136 aa)). Positions 147–151 (HRFFH) match the Histidine box-1 motif. Residues 160–164 (HRVHH) carry the Histidine box-2 motif. Residues 189–209 (TFMGPAIAPGHMITFWLWIAL) form a helical membrane-spanning segment. The Histidine box-3 motif lies at 239–245 (YHDYHHY).

Belongs to the sterol desaturase family. As to quaternary structure, interacts with ACBP1. It depends on Fe cation as a cofactor. As to expression, expressed in rosettes, stems, roots, floral buds, flowers and siliques.

It is found in the endoplasmic reticulum membrane. The catalysed reaction is 4,4-dimethyl-5alpha-cholest-7-en-3beta-ol + 6 Fe(II)-[cytochrome b5] + 3 O2 + 5 H(+) = 4alpha-carboxy-4beta-methyl-5alpha-cholest-7-ene-3beta-ol + 6 Fe(III)-[cytochrome b5] + 4 H2O. It catalyses the reaction 24-methylenecycloartanol + 6 Fe(II)-[cytochrome b5] + 3 O2 + 5 H(+) = 4alpha-carboxy-4beta,14alpha-dimethyl-9beta,19-cyclo-5alpha-ergost-24(24(1))-en-3beta-ol + 6 Fe(III)-[cytochrome b5] + 4 H2O. In terms of biological role, non-heme iron oxygenase involved in sterols biosynthesis by catalyzing the removal of the first methyl group at the C-4 position. 4,4-dimethyl-9-beta,19-cyclopropylsterols such as 24-methylenecycloartanol are the preferred substrates. Acts as a rate-limiting enzyme in the sterol pathway via interaction with ACBP1; sterols serve as lipid modulators for gene expression of homeodomain-leucine zipper IV transcription factors. Together with SMO1-2, involved in the maintenance of sterol composition to balance auxin and cytokinin activities during embryogenesis. In Arabidopsis thaliana (Mouse-ear cress), this protein is Methylsterol monooxygenase 1-1.